The primary structure comprises 718 residues: Interleukin-1 receptor-associated kinase 1 (718 aa).

A Death domain is found at 27 to 106 (MCRFYKVMDA…DIITAWHPPA (80 aa)). T66 carries the phosphothreonine; by PKC/PRKCI modification. The tract at residues 110–211 (PPSTTSLTPS…LHEICQGTHD (102 aa)) is proST region. Residue K134 forms a Glycyl lysine isopeptide (Lys-Gly) (interchain with G-Cter in ubiquitin) linkage. Positions 146–188 (AFPGSQTHSDPELCPGPSPAAHQPPLPSPAPSSTKPSPESPMS) are disordered. Positions 159–175 (CPGPSPAAHQPPLPSPA) are enriched in pro residues. Over residues 176–188 (PSSTKPSPESPMS) the composition is skewed to low complexity. K180 participates in a covalent cross-link: Glycyl lysine isopeptide (Lys-Gly) (interchain with G-Cter in ubiquitin). T209 bears the Phosphothreonine; by IRAK4 mark. The Protein kinase domain occupies 212–521 (FSEELKIGEG…TQVYQTLEEL (310 aa)). Residues 218–226 (IGEGGFGCV) and K239 contribute to the ATP site. The active-site Proton acceptor is D340. ATP contacts are provided by residues 342–345 (KSSN) and D358. S375 is subject to Phosphoserine. T387 bears the Phosphothreonine mark. Residues 534–554 (AASRSPPSPQENSYVSTSGSA) form a disordered region. Residues 543–554 (QENSYVSTSGSA) are compositionally biased toward polar residues. The residue at position 556 (S556) is a Phosphoserine. Disordered regions lie at residues 569-594 (GAQA…SVSD), 631-662 (GAAR…SSRP), and 692-718 (LSSS…EFRS). Positions 692–703 (LSSSSLPDSGQD) are enriched in low complexity. Residues 704–718 (LQDRQGPEERDEFRS) are compositionally biased toward basic and acidic residues.

This sequence belongs to the protein kinase superfamily. TKL Ser/Thr protein kinase family. Pelle subfamily. As to quaternary structure, homodimer. Forms a complex with TRAF6, PELI1, IRAK4 and MYD88. Direct binding of SMAD6 to PELI1 prevents complex formation and hence negatively regulates IL1R-TLR signaling and eventually NF-kappa-B-mediated gene expression. The TRAF6-PELI1-IRAK1-IRAK4-MYD88 complex recruits MAP3K7/TAK1, TAB1 and TAB2 to mediate NF-kappa-B activation. Interaction with MYD88 recruits IRAK1 to the stimulated receptor complex. Interacts with TOLLIP; this interaction occurs in the cytosol prior to receptor activation. Interacts with IL1RL1. Interacts (when polyubiquitinated) with IKBKG/NEMO. Interacts with RSAD2/viperin. Interacts with IRAK1BP1. Interacts with PELI2. Interacts with ZC3H12A; this interaction increases the interaction between ZC3H12A and IKBKB/IKKB. Interacts with IRAK4. Interacts with PELI3. Interacts with PELI1 and TRAF6. Interacts with INAVA; the interaction takes place upon PRR stimulation. Interacts (via C-terminus) with NFATC4 (via N-terminus). Mg(2+) serves as cofactor. Following recruitment on the activated receptor complex, phosphorylated on Thr-209, probably by IRAK4, resulting in a conformational change of the kinase domain, allowing further phosphorylations to take place. Thr-387 phosphorylation in the activation loop is required to achieve full enzymatic activity. In terms of processing, polyubiquitinated by TRAF6 after cell stimulation with IL-1-beta by PELI1, PELI2 and PELI3. Polyubiquitination occurs with polyubiquitin chains linked through 'Lys-63'. Ubiquitination promotes interaction with NEMO/IKBKG. Also sumoylated; leading to nuclear translocation.

It is found in the cytoplasm. Its subcellular location is the nucleus. The protein localises to the lipid droplet. It carries out the reaction L-seryl-[protein] + ATP = O-phospho-L-seryl-[protein] + ADP + H(+). It catalyses the reaction L-threonyl-[protein] + ATP = O-phospho-L-threonyl-[protein] + ADP + H(+). Functionally, serine/threonine-protein kinase that plays a critical role in initiating innate immune response against foreign pathogens. Involved in Toll-like receptor (TLR) and IL-1R signaling pathways. Is rapidly recruited by MYD88 to the receptor-signaling complex upon TLR activation. Association with MYD88 leads to IRAK1 phosphorylation by IRAK4 and subsequent autophosphorylation and kinase activation. Phosphorylates E3 ubiquitin ligases Pellino proteins (PELI1, PELI2 and PELI3) to promote pellino-mediated polyubiquitination of IRAK1. Then, the ubiquitin-binding domain of IKBKG/NEMO binds to polyubiquitinated IRAK1 bringing together the IRAK1-MAP3K7/TAK1-TRAF6 complex and the NEMO-IKKA-IKKB complex. In turn, MAP3K7/TAK1 activates IKKs (CHUK/IKKA and IKBKB/IKKB) leading to NF-kappa-B nuclear translocation and activation. Alternatively, phosphorylates TIRAP to promote its ubiquitination and subsequent degradation. Phosphorylates the interferon regulatory factor 7 (IRF7) to induce its activation and translocation to the nucleus, resulting in transcriptional activation of type I IFN genes, which drive the cell in an antiviral state. When sumoylated, translocates to the nucleus and phosphorylates STAT3. In Bos taurus (Bovine), this protein is Interleukin-1 receptor-associated kinase 1 (IRAK1).